Consider the following 137-residue polypeptide: MLSPKKVKFRKQQRGRRTGTRLAGSTLSFGEFGLQATECGMITARQIEAARIAMTRYIKRAGKTWIRIFPDKPFTKKPAEVRMGKGKGAPEGWAAVIRPGRILYEMDGVPDELAREAFRLAAHKLPVKTKFVKRETA.

The span at 1–19 (MLSPKKVKFRKQQRGRRTG) shows a compositional bias: basic residues. Positions 1–20 (MLSPKKVKFRKQQRGRRTGT) are disordered.

Belongs to the universal ribosomal protein uL16 family. In terms of assembly, part of the 50S ribosomal subunit.

Its function is as follows. Binds 23S rRNA and is also seen to make contacts with the A and possibly P site tRNAs. This is Large ribosomal subunit protein uL16 from Desulfosudis oleivorans (strain DSM 6200 / JCM 39069 / Hxd3) (Desulfococcus oleovorans).